We begin with the raw amino-acid sequence, 116 residues long: UPF0342 protein RBAM_010030 (116 aa).

The protein belongs to the UPF0342 family.

The protein is UPF0342 protein RBAM_010030 of Bacillus velezensis (strain DSM 23117 / BGSC 10A6 / LMG 26770 / FZB42) (Bacillus amyloliquefaciens subsp. plantarum).